Reading from the N-terminus, the 303-residue chain is MRLFNWRRQAVLNAMPLVKPDQVRTPWHEFWRRFRRQHMAMTAALFVILLIVVAIFARWIAPYDAENYFDYDNLNNGPSLQHWFGVDSLGRDIFSRVLVGAQISLAAGVFAVFIGAAIGTLLGLLAGYYEGWWDRLIMRICDVLFAFPGILLAIAVVAVLGSGIANVIIAVAIFSIPAFARLVRGNTLVLKQQTFIESARSIGASDMTILLRHILPGTVSSIVVFFTMRIGTSIISAASLSFLGLGAQPPTPEWGAMLNEARADMVIAPHVAVFPALAIFLTVLAFNLLGDGLRDALDPKIKG.

The next 6 helical transmembrane spans lie at 40 to 60 (AMTA…ARWI), 105 to 125 (LAAG…LGLL), 144 to 164 (LFAF…GSGI), 165 to 185 (ANVI…LVRG), 222 to 242 (IVVF…SLSF), and 266 to 286 (VIAP…VLAF). The 190-residue stretch at 101-290 (AQISLAAGVF…LTVLAFNLLG (190 aa)) folds into the ABC transmembrane type-1 domain.

It belongs to the binding-protein-dependent transport system permease family. As to quaternary structure, the complex is composed of two ATP-binding proteins (GsiA), two transmembrane proteins (GsiC and GsiD) and a solute-binding protein (GsiB).

The protein resides in the cell inner membrane. Functionally, part of the ABC transporter complex GsiABCD involved in glutathione import. Probably responsible for the translocation of the substrate across the membrane. In Escherichia coli O157:H7, this protein is Glutathione transport system permease protein GsiD.